The following is a 187-amino-acid chain: Adenylate kinase (187 aa).

Gly-11–Thr-16 serves as a coordination point for ATP. The NMP stretch occupies residues Ser-31–Val-60. Residues Thr-32, Arg-37, Asp-58–Val-60, Gly-86–Arg-89, and Gln-93 contribute to the AMP site. The interval Gly-127–Asp-137 is LID. Arg-128 provides a ligand contact to ATP. 2 residues coordinate AMP: Arg-134 and Arg-145. Gly-173 contacts ATP.

It belongs to the adenylate kinase family. In terms of assembly, monomer.

It localises to the cytoplasm. It carries out the reaction AMP + ATP = 2 ADP. Its pathway is purine metabolism; AMP biosynthesis via salvage pathway; AMP from ADP: step 1/1. In terms of biological role, catalyzes the reversible transfer of the terminal phosphate group between ATP and AMP. Plays an important role in cellular energy homeostasis and in adenine nucleotide metabolism. This chain is Adenylate kinase, found in Leptospira interrogans serogroup Icterohaemorrhagiae serovar copenhageni (strain Fiocruz L1-130).